A 335-amino-acid polypeptide reads, in one-letter code: Holliday junction branch migration complex subunit RuvB (335 aa).

Residues 4–184 (ADRIISTSAK…FGIVQRLEFY (181 aa)) are large ATPase domain (RuvB-L). ATP is bound by residues I23, R24, G65, K68, T69, T70, 131–133 (EDY), R174, Y184, and R221. A Mg(2+)-binding site is contributed by T69. Residues 185 to 255 (AVEDLTSIVA…SAKAALLMLD (71 aa)) are small ATPAse domain (RuvB-S). The head domain (RuvB-H) stretch occupies residues 258–335 (DAGFDYLDRK…RYFGLEKLTE (78 aa)). Residues R294, R313, and R318 each contribute to the DNA site.

It belongs to the RuvB family. As to quaternary structure, homohexamer. Forms an RuvA(8)-RuvB(12)-Holliday junction (HJ) complex. HJ DNA is sandwiched between 2 RuvA tetramers; dsDNA enters through RuvA and exits via RuvB. An RuvB hexamer assembles on each DNA strand where it exits the tetramer. Each RuvB hexamer is contacted by two RuvA subunits (via domain III) on 2 adjacent RuvB subunits; this complex drives branch migration. In the full resolvosome a probable DNA-RuvA(4)-RuvB(12)-RuvC(2) complex forms which resolves the HJ.

It is found in the cytoplasm. It catalyses the reaction ATP + H2O = ADP + phosphate + H(+). The RuvA-RuvB-RuvC complex processes Holliday junction (HJ) DNA during genetic recombination and DNA repair, while the RuvA-RuvB complex plays an important role in the rescue of blocked DNA replication forks via replication fork reversal (RFR). RuvA specifically binds to HJ cruciform DNA, conferring on it an open structure. The RuvB hexamer acts as an ATP-dependent pump, pulling dsDNA into and through the RuvAB complex. RuvB forms 2 homohexamers on either side of HJ DNA bound by 1 or 2 RuvA tetramers; 4 subunits per hexamer contact DNA at a time. Coordinated motions by a converter formed by DNA-disengaged RuvB subunits stimulates ATP hydrolysis and nucleotide exchange. Immobilization of the converter enables RuvB to convert the ATP-contained energy into a lever motion, pulling 2 nucleotides of DNA out of the RuvA tetramer per ATP hydrolyzed, thus driving DNA branch migration. The RuvB motors rotate together with the DNA substrate, which together with the progressing nucleotide cycle form the mechanistic basis for DNA recombination by continuous HJ branch migration. Branch migration allows RuvC to scan DNA until it finds its consensus sequence, where it cleaves and resolves cruciform DNA. The chain is Holliday junction branch migration complex subunit RuvB from Pasteurella multocida (strain Pm70).